A 525-amino-acid polypeptide reads, in one-letter code: Lysine--tRNA ligase (525 aa).

The Mg(2+) site is built by glutamate 419 and glutamate 426.

It belongs to the class-II aminoacyl-tRNA synthetase family. As to quaternary structure, homodimer. Requires Mg(2+) as cofactor.

It is found in the cytoplasm. It carries out the reaction tRNA(Lys) + L-lysine + ATP = L-lysyl-tRNA(Lys) + AMP + diphosphate. The sequence is that of Lysine--tRNA ligase (lysS) from Deinococcus radiodurans (strain ATCC 13939 / DSM 20539 / JCM 16871 / CCUG 27074 / LMG 4051 / NBRC 15346 / NCIMB 9279 / VKM B-1422 / R1).